The primary structure comprises 708 residues: Kelch-like protein 11 (708 aa).

An N-terminal signal peptide occupies residues 1-15 (MAAAAVAAAAAAAAA). Positions 47–70 (DFGPGPGISAMEASGGDPGPEAED) are disordered. Residues 94–170 (CDITLCFGGA…MYTGRIRVST (77 aa)) form the BTB domain. In terms of domain architecture, BACK spans 205-307 (CVAIHSLAHM…KPTYLTRHVK (103 aa)). 5 Kelch repeats span residues 360–407 (VIMV…VTES), 408–453 (YVYV…EVKG), 455–501 (LYSI…AIED), 503–556 (FVYI…VVNS), and 610–661 (DVFI…HVRI). A Phosphoserine modification is found at Ser-465.

Component of a cullin-RING-based BCR (BTB-CUL3-RBX1) E3 ubiquitin-protein ligase complex. Homodimer. Interacts with CUL3.

In terms of biological role, component of a cullin-RING-based BCR (BTB-CUL3-RBX1) E3 ubiquitin-protein ligase complex that mediates the ubiquitination of target proteins, leading most often to their proteasomal degradation. This chain is Kelch-like protein 11 (KLHL11), found in Homo sapiens (Human).